The following is a 259-amino-acid chain: Aliphatic sulfonates import ATP-binding protein SsuB 2 (259 aa).

One can recognise an ABC transporter domain in the interval Leu-17–Ile-238. Gly-49–Ser-56 is an ATP binding site.

It belongs to the ABC transporter superfamily. Aliphatic sulfonates importer (TC 3.A.1.17.2) family. The complex is composed of two ATP-binding proteins (SsuB), two transmembrane proteins (SsuC) and a solute-binding protein (SsuA).

The protein resides in the cell inner membrane. The enzyme catalyses ATP + H2O + aliphatic sulfonate-[sulfonate-binding protein]Side 1 = ADP + phosphate + aliphatic sulfonateSide 2 + [sulfonate-binding protein]Side 1.. Its function is as follows. Part of the ABC transporter complex SsuABC involved in aliphatic sulfonates import. Responsible for energy coupling to the transport system. This chain is Aliphatic sulfonates import ATP-binding protein SsuB 2, found in Agrobacterium fabrum (strain C58 / ATCC 33970) (Agrobacterium tumefaciens (strain C58)).